The following is a 131-amino-acid chain: Fluoride-specific ion channel FluC (131 aa).

Helical transmembrane passes span 10-30 (AAVA…SGLV), 36-56 (FPMG…FLTW), 71-91 (LATV…YETV), and 99-119 (VLSI…VLGG). 2 residues coordinate Na(+): Gly-78 and Thr-81.

This sequence belongs to the fluoride channel Fluc/FEX (TC 1.A.43) family.

The protein localises to the cell membrane. The catalysed reaction is fluoride(in) = fluoride(out). Na(+) is not transported, but it plays an essential structural role and its presence is essential for fluoride channel function. Its function is as follows. Fluoride-specific ion channel. Important for reducing fluoride concentration in the cell, thus reducing its toxicity. In Methanopyrus kandleri (strain AV19 / DSM 6324 / JCM 9639 / NBRC 100938), this protein is Fluoride-specific ion channel FluC.